The primary structure comprises 217 residues: 3-isopropylmalate dehydratase small subunit (217 aa).

This sequence belongs to the LeuD family. LeuD type 1 subfamily. As to quaternary structure, heterodimer of LeuC and LeuD.

It carries out the reaction (2R,3S)-3-isopropylmalate = (2S)-2-isopropylmalate. Its pathway is amino-acid biosynthesis; L-leucine biosynthesis; L-leucine from 3-methyl-2-oxobutanoate: step 2/4. Catalyzes the isomerization between 2-isopropylmalate and 3-isopropylmalate, via the formation of 2-isopropylmaleate. The sequence is that of 3-isopropylmalate dehydratase small subunit from Paracidovorax citrulli (strain AAC00-1) (Acidovorax citrulli).